The chain runs to 212 residues: Calaxin (212 aa).

3 EF-hand domains span residues Thr65 to Gly100, Thr101 to Lys136, and Gly146 to Leu181. Asp78, Asp80, Asp82, Cys84, Glu89, Asp114, Asn116, Asp118, Glu125, Asp159, Asp161, Asp163, Lys165, and Asp170 together coordinate Ca(2+).

As to quaternary structure, component of the outer dynein arm-docking complex along with ODAD1, ODAD2, ODAD3 and ODAD4.

The protein localises to the cytoplasm. It localises to the cytoskeleton. It is found in the cilium axoneme. The protein resides in the cell projection. Its subcellular location is the cilium. The protein localises to the flagellum. Its function is as follows. Component of the outer dynein arm-docking complex (ODA-DC) that mediates outer dynein arms (ODA) binding onto the doublet microtubule. Seems to regulate the assembly of both ODAs and their axonemal docking complex onto ciliary microtubules. Regulates ciliary and flagellar motility and is required for cilia-driven determination of body laterality. The polypeptide is Calaxin (Clxn) (Mus musculus (Mouse)).